We begin with the raw amino-acid sequence, 72 residues long: UPF0150 protein ssl0738 (72 aa).

It belongs to the UPF0150 family.

This is UPF0150 protein ssl0738 from Synechocystis sp. (strain ATCC 27184 / PCC 6803 / Kazusa).